Reading from the N-terminus, the 161-residue chain is Small ribosomal subunit protein uS9 (161 aa).

The protein belongs to the universal ribosomal protein uS9 family.

The chain is Small ribosomal subunit protein uS9 from Rickettsia canadensis (strain McKiel).